The following is a 352-amino-acid chain: NAD(P)H pyrophosphatase NUDT13, mitochondrial (352 aa).

Residues 1–20 (MSLYCRTFFRRKSFGCYRLL) constitute a mitochondrion transit peptide. The Nudix hydrolase domain occupies 196-323 (PQMAPVVITL…SLALQPSEAS (128 aa)). A Nudix box motif is present at residues 216 to 240 (RQSSFPKGLYSALAGFCDIGESVEE).

It belongs to the Nudix hydrolase family. Mg(2+) serves as cofactor. Requires Mn(2+) as cofactor.

It localises to the mitochondrion. It carries out the reaction NADH + H2O = reduced beta-nicotinamide D-ribonucleotide + AMP + 2 H(+). The enzyme catalyses NAD(+) + H2O = beta-nicotinamide D-ribonucleotide + AMP + 2 H(+). It catalyses the reaction NADPH + H2O = reduced beta-nicotinamide D-ribonucleotide + adenosine 2',5'-bisphosphate + 2 H(+). Its function is as follows. NAD(P)H pyrophosphatase that hydrolyzes NADH into NMNH and AMP, and NADPH into NMNH and 2',5'-ADP. Has a marked preference for the reduced pyridine nucleotides. Does not show activity toward NAD-capped RNAs; the NAD-cap is an atypical cap present at the 5'-end of some RNAs. The sequence is that of NAD(P)H pyrophosphatase NUDT13, mitochondrial from Mus musculus (Mouse).